Consider the following 118-residue polypeptide: Fluoride-specific ion channel FluC 2 (118 aa).

A run of 4 helical transmembrane segments spans residues 1–21 (MMEA…RFAI), 33–53 (FPIA…YIIG), 55–75 (GVTT…FTTF), and 93–113 (ILFL…FLGM). Na(+) is bound by residues G70 and T73.

The protein belongs to the fluoride channel Fluc/FEX (TC 1.A.43) family.

It localises to the cell membrane. The catalysed reaction is fluoride(in) = fluoride(out). Its activity is regulated as follows. Na(+) is not transported, but it plays an essential structural role and its presence is essential for fluoride channel function. Fluoride-specific ion channel. Important for reducing fluoride concentration in the cell, thus reducing its toxicity. The protein is Fluoride-specific ion channel FluC 2 of Bacillus cereus (strain ATCC 10987 / NRS 248).